The chain runs to 660 residues: Bifunctional polymyxin resistance protein ArnA (660 aa).

Residues 1–304 (MKTVVFAYHD…TLGLVQGSRL (304 aa)) are formyltransferase ArnAFT. (6R)-10-formyltetrahydrofolate is bound at residue 86 to 88 (HLI). H104 acts as the Proton donor; for formyltransferase activity in catalysis. (6R)-10-formyltetrahydrofolate is bound by residues R114 and 136–140 (VKRAD). The dehydrogenase ArnADH stretch occupies residues 314-660 (RRTRVLILGV…RTVDLTDKPS (347 aa)). NAD(+)-binding positions include D347 and 368-369 (DI). UDP-alpha-D-glucuronate contacts are provided by residues A393, Y398, and 432–433 (TS). The Proton acceptor; for decarboxylase activity role is filled by E434. Residues R460, N492, 526 to 535 (KLIDGGKQKR), and Y613 each bind UDP-alpha-D-glucuronate. Catalysis depends on R619, which acts as the Proton donor; for decarboxylase activity.

In the N-terminal section; belongs to the Fmt family. UDP-L-Ara4N formyltransferase subfamily. The protein in the C-terminal section; belongs to the NAD(P)-dependent epimerase/dehydratase family. UDP-glucuronic acid decarboxylase subfamily. Homohexamer, formed by a dimer of trimers.

It carries out the reaction UDP-alpha-D-glucuronate + NAD(+) = UDP-beta-L-threo-pentopyranos-4-ulose + CO2 + NADH. It catalyses the reaction UDP-4-amino-4-deoxy-beta-L-arabinose + (6R)-10-formyltetrahydrofolate = UDP-4-deoxy-4-formamido-beta-L-arabinose + (6S)-5,6,7,8-tetrahydrofolate + H(+). It participates in nucleotide-sugar biosynthesis; UDP-4-deoxy-4-formamido-beta-L-arabinose biosynthesis; UDP-4-deoxy-4-formamido-beta-L-arabinose from UDP-alpha-D-glucuronate: step 1/3. It functions in the pathway nucleotide-sugar biosynthesis; UDP-4-deoxy-4-formamido-beta-L-arabinose biosynthesis; UDP-4-deoxy-4-formamido-beta-L-arabinose from UDP-alpha-D-glucuronate: step 3/3. The protein operates within bacterial outer membrane biogenesis; lipopolysaccharide biosynthesis. Functionally, bifunctional enzyme that catalyzes the oxidative decarboxylation of UDP-glucuronic acid (UDP-GlcUA) to UDP-4-keto-arabinose (UDP-Ara4O) and the addition of a formyl group to UDP-4-amino-4-deoxy-L-arabinose (UDP-L-Ara4N) to form UDP-L-4-formamido-arabinose (UDP-L-Ara4FN). The modified arabinose is attached to lipid A and is required for resistance to polymyxin and cationic antimicrobial peptides. The protein is Bifunctional polymyxin resistance protein ArnA of Escherichia coli O157:H7.